A 500-amino-acid polypeptide reads, in one-letter code: Probable cytosol aminopeptidase (500 aa).

K264 and D269 together coordinate Mn(2+). Residue K276 is part of the active site. 3 residues coordinate Mn(2+): D287, D346, and E348. R350 is an active-site residue.

Belongs to the peptidase M17 family. Mn(2+) serves as cofactor.

It is found in the cytoplasm. It catalyses the reaction Release of an N-terminal amino acid, Xaa-|-Yaa-, in which Xaa is preferably Leu, but may be other amino acids including Pro although not Arg or Lys, and Yaa may be Pro. Amino acid amides and methyl esters are also readily hydrolyzed, but rates on arylamides are exceedingly low.. The catalysed reaction is Release of an N-terminal amino acid, preferentially leucine, but not glutamic or aspartic acids.. Its function is as follows. Presumably involved in the processing and regular turnover of intracellular proteins. Catalyzes the removal of unsubstituted N-terminal amino acids from various peptides. In Afipia carboxidovorans (strain ATCC 49405 / DSM 1227 / KCTC 32145 / OM5) (Oligotropha carboxidovorans), this protein is Probable cytosol aminopeptidase.